Reading from the N-terminus, the 349-residue chain is Quinone oxidoreductase-like protein 2 (349 aa).

K35 is subject to N6-acetyllysine. Position 200 is an N6-succinyllysine (K200).

It belongs to the zinc-containing alcohol dehydrogenase family. Quinone oxidoreductase subfamily.

The polypeptide is Quinone oxidoreductase-like protein 2 (Bos taurus (Bovine)).